An 833-amino-acid chain; its full sequence is Transcription factor MBP1 (833 aa).

One can recognise an HTH APSES-type domain in the interval 5-111; that stretch reads IYSARYSGVD…FTQTDGSASP (107 aa). Residues 36-57 constitute a DNA-binding region (H-T-H motif); that stretch reads ATHILKAANFAKAKRTRILEKE. Disordered regions lie at residues 104–223 and 280–329; these read QTDG…QSPT and QQSS…SPII. S110 is modified (phosphoserine). A compositionally biased stretch (basic residues) spans 115 to 129; the sequence is PKHHHASKVDRKKAI. Residues 139-149 show a composition bias toward basic and acidic residues; sequence ETKRNNKKAEE. Residues 201–223 show a composition bias toward polar residues; that stretch reads PNSSISTTQLPSIRSTMGPQSPT. Low complexity predominate over residues 280–307; sequence QQSSLIQTQQTESMATSVSSSPSLPTSP. The residue at position 325 (T325) is a Phosphothreonine. 2 positions are modified to phosphoserine: S326 and S330. ANK repeat units lie at residues 394 to 423 and 512 to 541; these read ELHTAFHWACSMGNLPIAEALYEAGTSIRS and NGDTALHIASKNGDVVFFNTLVKMGALTTI. Residue S827 is modified to Phosphoserine.

In terms of assembly, component of the transcription complex MCB-binding factor (MBF) composed of SWI6 and MBP1. Interacts with MSA1.

It localises to the nucleus. Its function is as follows. Binds to MCB elements (Mlu I cell cycle box) found in the promoter of most DNA synthesis genes. Transcriptional activation by MBF has an important role in the transition from G1 to S phase. It may have a dual role in that it behaves as an activator of transcription at the G1-S boundary and as a repressor during other stages of the cell cycle. This Saccharomyces cerevisiae (strain ATCC 204508 / S288c) (Baker's yeast) protein is Transcription factor MBP1 (MBP1).